Reading from the N-terminus, the 143-residue chain is Dehydrin DHN2 (143 aa).

Over residues 1-10 (MEYQGQTGHA) the composition is skewed to polar residues. The segment at 1 to 143 (MEYQGQTGHA…IKEKLPGGQH (143 aa)) is disordered. Residues 24–34 (GHGGATGGPTG) show a composition bias toward gly residues. The segment covering 35 to 46 (THGAAAAAAGTG) has biased composition (low complexity). Positions 51-61 (TRDDHKTDGVL) are enriched in basic and acidic residues. Positions 62–71 (RRSGSSSSSS) are enriched in low complexity. Basic and acidic residues predominate over residues 86-101 (KEKIKEKLPGGAHKDA). The segment covering 109-123 (AAGEYAGTGTHGAEA) has biased composition (low complexity). Basic and acidic residues predominate over residues 124–143 (TGEKKGVMDKIKEKLPGGQH).

It belongs to the plant dehydrin family.

The protein is Dehydrin DHN2 (DHN2) of Hordeum vulgare (Barley).